The sequence spans 28 residues: Potassium channel toxin kappa-KTx 2.9 (28 aa).

Intrachain disulfides connect Cys-4–Cys-22 and Cys-8–Cys-18.

It belongs to the short scorpion toxin superfamily. Potassium channel inhibitor family. Gamma-KTx 2 subfamily. Contains 2 disulfide bonds. Expressed by the venom gland.

The protein localises to the secreted. Reversibly blocks voltage-gated potassium channels Kv1.2/KCNA2 and Kv1.3/KCNA3. The chain is Potassium channel toxin kappa-KTx 2.9 from Pandinus imperator (Emperor scorpion).